The primary structure comprises 251 residues: CDP-diacylglycerol pyrophosphatase (251 aa).

Residues A4–W24 form a helical membrane-spanning segment.

The protein belongs to the Cdh family.

The protein localises to the cell inner membrane. It carries out the reaction a CDP-1,2-diacyl-sn-glycerol + H2O = a 1,2-diacyl-sn-glycero-3-phosphate + CMP + 2 H(+). It participates in phospholipid metabolism; CDP-diacylglycerol degradation; phosphatidate from CDP-diacylglycerol: step 1/1. The sequence is that of CDP-diacylglycerol pyrophosphatase from Escherichia coli (strain SE11).